The sequence spans 143 residues: MSTKKVYSFLSQAFIFSAIMLISNIIATHLPIPMPSSVIGLVILFSLLCLKVIKLEQVESLGTALTGIIGFLFVPSGISVINSFGVMGQYFVQILTVIVVATVILLAVTGLFAQFILGKDEKETEDTKELKVVNKGRKHGKVA.

A run of 4 helical transmembrane segments spans residues 6–26, 30–50, 61–81, and 97–117; these read VYSFLSQAFIFSAIMLISNII, LPIPMPSSVIGLVILFSLLCL, LGTALTGIIGFLFVPSGISVI, and VIVVATVILLAVTGLFAQFIL.

Belongs to the CidA/LrgA family. LrgA subfamily.

Its subcellular location is the cell membrane. In terms of biological role, inhibits the expression or activity of extracellular murein hydrolases by interacting, possibly with LrgB, with the holin-like protein CidA. The LrgAB and CidA proteins may affect the proton motive force of the membrane. May be involved in programmed cell death (PCD), possibly triggering PCD in response to antibiotics and environmental stresses. This Bacillus cereus (strain AH820) protein is Antiholin-like protein LrgA.